The following is a 186-amino-acid chain: Small ribosomal subunit protein uS7 (186 aa).

Belongs to the universal ribosomal protein uS7 family. In terms of assembly, part of the 30S ribosomal subunit.

Functionally, one of the primary rRNA binding proteins, it binds directly to 16S rRNA where it nucleates assembly of the head domain of the 30S subunit. Is located at the subunit interface close to the decoding center. The sequence is that of Small ribosomal subunit protein uS7 from Methanococcoides burtonii (strain DSM 6242 / NBRC 107633 / OCM 468 / ACE-M).